Here is a 524-residue protein sequence, read N- to C-terminus: GMP synthase [glutamine-hydrolyzing] (524 aa).

The Glutamine amidotransferase type-1 domain maps to 8-206; it reads KILILDFGSQ…VRKLCQCEAR (199 aa). The Nucleophile role is filled by Cys85. Residues His180 and Glu182 contribute to the active site. Residues 207 to 399 form the GMPS ATP-PPase domain; that stretch reads WTTGNIVEDA…LGLPYEMVYR (193 aa). 234 to 240 serves as a coordination point for ATP; sequence SGGVDSS.

Homodimer.

The catalysed reaction is XMP + L-glutamine + ATP + H2O = GMP + L-glutamate + AMP + diphosphate + 2 H(+). Its pathway is purine metabolism; GMP biosynthesis; GMP from XMP (L-Gln route): step 1/1. Its function is as follows. Catalyzes the synthesis of GMP from XMP. This is GMP synthase [glutamine-hydrolyzing] from Methylococcus capsulatus (strain ATCC 33009 / NCIMB 11132 / Bath).